Consider the following 292-residue polypeptide: Ribosomal protein L11 methyltransferase (292 aa).

4 residues coordinate S-adenosyl-L-methionine: Thr-144, Gly-165, Asp-187, and Asn-229.

The protein belongs to the methyltransferase superfamily. PrmA family.

It localises to the cytoplasm. The catalysed reaction is L-lysyl-[protein] + 3 S-adenosyl-L-methionine = N(6),N(6),N(6)-trimethyl-L-lysyl-[protein] + 3 S-adenosyl-L-homocysteine + 3 H(+). In terms of biological role, methylates ribosomal protein L11. This Pseudomonas putida (strain ATCC 47054 / DSM 6125 / CFBP 8728 / NCIMB 11950 / KT2440) protein is Ribosomal protein L11 methyltransferase.